A 547-amino-acid polypeptide reads, in one-letter code: Sesquiterpene synthase TPS3 (547 aa).

Residues Arg265, Asp302, Asp306, Arg443, and Asp446 each coordinate (2E,6E)-farnesyl diphosphate. Mg(2+)-binding residues include Asp302 and Asp306. Positions Asp302–Asp306 match the DDXXD motif motif. Mg(2+) is bound by residues Asp446, Thr450, and Glu454.

The protein belongs to the terpene synthase family. Tpsb subfamily. As to quaternary structure, monomer. Mg(2+) serves as cofactor.

Its subcellular location is the cytoplasm. It catalyses the reaction (2E,6E)-farnesyl diphosphate = (1S,5S,6R)-alpha-bergamotene + diphosphate. It participates in secondary metabolite biosynthesis; terpenoid biosynthesis. Sesquiterpene synthase involved in the biosynthesis of volatile organic compounds. Mediates the conversion of (2E,6E)-farnesyl diphosphate (FPP) into alpha-bergamotene. Does not use (2E)-geranyl diphosphate (GPP) as substrate. The chain is Sesquiterpene synthase TPS3 from Cananga odorata (Ylang-ylang tree).